A 236-amino-acid polypeptide reads, in one-letter code: tRNA1(Val) (adenine(37)-N6)-methyltransferase (236 aa).

This sequence belongs to the methyltransferase superfamily. tRNA (adenine-N(6)-)-methyltransferase family.

Its subcellular location is the cytoplasm. It catalyses the reaction adenosine(37) in tRNA1(Val) + S-adenosyl-L-methionine = N(6)-methyladenosine(37) in tRNA1(Val) + S-adenosyl-L-homocysteine + H(+). Functionally, specifically methylates the adenine in position 37 of tRNA(1)(Val) (anticodon cmo5UAC). In Aeromonas hydrophila subsp. hydrophila (strain ATCC 7966 / DSM 30187 / BCRC 13018 / CCUG 14551 / JCM 1027 / KCTC 2358 / NCIMB 9240 / NCTC 8049), this protein is tRNA1(Val) (adenine(37)-N6)-methyltransferase.